The following is a 473-amino-acid chain: SHC-transforming protein 1 (473 aa).

Residues 1-26 form a disordered region; that stretch reads MNKLSGGGGRRTRVEGGQLGGEEWTR. Serine 29 bears the Phosphoserine mark. The residue at position 44 (lysine 44) is an N6-acetyllysine. In terms of domain architecture, PID spans 46-229; it reads MGPGVSYLVR…AGFDGSAWDE (184 aa). The interval 216 to 314 is disordered; sequence HDRMAGFDGS…PSSGRELFDD (99 aa). The segment at 230 to 377 is CH1; the sequence is EEEEPPDHQY…AMAEQLRGEP (148 aa). Phosphotyrosine occurs at positions 239, 240, and 317. The segment at 328-348 is disordered; that stretch reads QAGAGAGPPNPTINGSAPRDL. Residue serine 343 is modified to Phosphoserine. In terms of domain architecture, SH2 spans 378-469; it reads WFHGKLSRRE…GSELCLQQPV (92 aa).

Interacts with CPNE3; this interaction may mediate the binding of CPNE3 with ERBB2. Interacts with the Trk receptors NTRK1, NTRK2 and NTRK3; in a phosphotyrosine-dependent manner. Interacts with the NPXY motif of tyrosine-phosphorylated IGF1R and INSR in vitro via the PID domain. Once activated, binds to GRB2. Interacts with tyrosine-phosphorylated CD3T and DDR2. Interacts with the N-terminal region of APS. Interacts with phosphorylated LRP1 and IRS4. Interacts with INPP5D/SHIP1 and INPPL1/SHIP2. Interacts with ALK, GAB2, GRB7 and KIT. Interacts with PTPN6/SHP (tyrosine phosphorylated). Identified in a complex containing FGFR4, NCAM1, CDH2, PLCG1, FRS2, SRC, SHC1, GAP43 and CTTN. Interacts with FLT4 (tyrosine-phosphorylated). Interacts with EPHB1 and GRB2; activates the MAPK/ERK cascade to regulate cell migration. Interacts with PDGFRB (tyrosine-phosphorylated). Interacts with ERBB4. Interacts with TEK/TIE2 (tyrosine-phosphorylated). Interacts with PTK2/FAK1. Interacts with CEACAM1; this interaction is CEACAM1-phosphorylation-dependent and mediates interaction with EGFR or INSR resulting in decrease coupling of SHC1 to the MAPK3/ERK1-MAPK1/ERK2 pathway. Interacts (via PID domain) with PEAK1 (when phosphorylated). Found in a complex with PPP1CA, PPP1CC, SHC1 and PEAK1. In terms of processing, phosphorylated by activated epidermal growth factor receptor. Phosphorylated in response to KIT signaling. Tyrosine phosphorylated in response to FLT3 and FLT4 signaling and by ligand-activated ALK. Tyrosine phosphorylated by ligand-activated PDGFRB. Tyrosine phosphorylated by TEK/TIE2. May be tyrosine phosphorylated by activated PTK2/FAK1. Tyrosine phosphorylated by activated PTK2B/PYK2. Dephosphorylation by PTPN2 may regulate interaction with GRB2.

The protein localises to the cytoplasm. The protein resides in the cell junction. Its subcellular location is the focal adhesion. Signaling adapter that couples activated growth factor receptors to signaling pathways. Participates in a signaling cascade initiated by activated KIT and KITLG/SCF. Participates in signaling downstream of the angiopoietin receptor TEK/TIE2, and plays a role in the regulation of endothelial cell migration and sprouting angiogenesis. The sequence is that of SHC-transforming protein 1 (SHC1) from Bos taurus (Bovine).